Consider the following 452-residue polypeptide: MKQFMLAGVSSGVGKTTVTLGILKALADRGYQVQPYKIGPDYIDTAYHSRITKRPSRNVDSFMIPDDQSLAWSYYKWHGDADVAVVEGVMGLFDGLGTDKDCASSASVAKKLGIPVVLIIDGKATSTSAAAMVHGFATFDPDLDIAGVIINRVASQTHFELIKGAIERYTDVEVLGYLPKNATAELPSRHLGLIPDVEMDDLDRRFEDLGAATAKHINLDRLLEKAELPDKRMTNPFRISNDQPLTLAYALDDAFHFYYEDNLDFLRELNVQLVPFSPLKDKELPAADAYYFGGGFPEVYAQELMANADFRASVKKAHEQGRPIYAECGGLMYLGELLEVEGQVYEMVGIFKGKSLMTPGLKSFGYCQAETQVDSLFGPKGTAVRGHEFHHSVFETEEDTVLKLEKVRDGQVVAAWTGGYQKGRTFASYLHVHFYQDEQLLANWLDYIKEAN.

A GATase cobBQ-type domain is found at 246–439 (TLAYALDDAF…LHVHFYQDEQ (194 aa)). The active-site Nucleophile is the C328.

This sequence belongs to the CobB/CbiA family. Requires Mg(2+) as cofactor.

The enzyme catalyses cob(II)yrinate + 2 L-glutamine + 2 ATP + 2 H2O = cob(II)yrinate a,c diamide + 2 L-glutamate + 2 ADP + 2 phosphate + 2 H(+). The protein operates within cofactor biosynthesis; adenosylcobalamin biosynthesis; cob(II)yrinate a,c-diamide from sirohydrochlorin (anaerobic route): step 10/10. Catalyzes the ATP-dependent amidation of the two carboxylate groups at positions a and c of cobyrinate, using either L-glutamine or ammonia as the nitrogen source. This is Cobyrinate a,c-diamide synthase from Streptococcus sanguinis (strain SK36).